Reading from the N-terminus, the 205-residue chain is Small ribosomal subunit protein uS4 (205 aa).

The tract at residues 18-46 (NIWGRPKSPVNRREYGPGQHGQRRKGKLS) is disordered. The 64-residue stretch at 94-157 (RRLDTVVYRA…KQLAFVLEAS (64 aa)) folds into the S4 RNA-binding domain.

The protein belongs to the universal ribosomal protein uS4 family. In terms of assembly, part of the 30S ribosomal subunit. Contacts protein S5. The interaction surface between S4 and S5 is involved in control of translational fidelity.

In terms of biological role, one of the primary rRNA binding proteins, it binds directly to 16S rRNA where it nucleates assembly of the body of the 30S subunit. With S5 and S12 plays an important role in translational accuracy. In Rhodopseudomonas palustris (strain HaA2), this protein is Small ribosomal subunit protein uS4.